A 408-amino-acid polypeptide reads, in one-letter code: Histidine--tRNA ligase (408 aa).

The protein belongs to the class-II aminoacyl-tRNA synthetase family.

It localises to the cytoplasm. It catalyses the reaction tRNA(His) + L-histidine + ATP = L-histidyl-tRNA(His) + AMP + diphosphate + H(+). In Methanospirillum hungatei JF-1 (strain ATCC 27890 / DSM 864 / NBRC 100397 / JF-1), this protein is Histidine--tRNA ligase.